A 333-amino-acid polypeptide reads, in one-letter code: Nucleoid-associated protein (333 aa).

Belongs to the YejK family.

It is found in the cytoplasm. The protein resides in the nucleoid. This Metapseudomonas resinovorans (Pseudomonas resinovorans) protein is Nucleoid-associated protein.